The following is a 418-amino-acid chain: Light-independent protochlorophyllide reductase subunit N (418 aa).

[4Fe-4S] cluster contacts are provided by cysteine 17, cysteine 42, and cysteine 103.

The protein belongs to the BchN/ChlN family. In terms of assembly, protochlorophyllide reductase is composed of three subunits; ChlL, ChlN and ChlB. Forms a heterotetramer of two ChlB and two ChlN subunits. The cofactor is [4Fe-4S] cluster.

It carries out the reaction chlorophyllide a + oxidized 2[4Fe-4S]-[ferredoxin] + 2 ADP + 2 phosphate = protochlorophyllide a + reduced 2[4Fe-4S]-[ferredoxin] + 2 ATP + 2 H2O. It functions in the pathway porphyrin-containing compound metabolism; chlorophyll biosynthesis (light-independent). Its function is as follows. Component of the dark-operative protochlorophyllide reductase (DPOR) that uses Mg-ATP and reduced ferredoxin to reduce ring D of protochlorophyllide (Pchlide) to form chlorophyllide a (Chlide). This reaction is light-independent. The NB-protein (ChlN-ChlB) is the catalytic component of the complex. In Prochlorococcus marinus (strain SARG / CCMP1375 / SS120), this protein is Light-independent protochlorophyllide reductase subunit N.